A 501-amino-acid polypeptide reads, in one-letter code: Acetylcholine receptor subunit beta (501 aa).

The first 23 residues, 1–23 (MALGALLLLLGVLGTPLAPGARG), serve as a signal peptide directing secretion. Residues 24–244 (SEAEGQLIKK…VIFYLIIRRK (221 aa)) are Extracellular-facing. An intrachain disulfide couples cysteine 151 to cysteine 165. An N-linked (GlcNAc...) asparagine glycan is attached at asparagine 164. The next 3 membrane-spanning stretches (helical) occupy residues 245–269 (PLFY…VFYL), 277–295 (MGLS…LLLA), and 311–332 (YLMF…VLNL). The Cytoplasmic portion of the chain corresponds to 333-469 (HHRSPHTHQM…WQFVAMVVDR (137 aa)). Residues 362–382 (RPKPERDQLPEPHHSLSPRSG) form a disordered region. A compositionally biased stretch (basic and acidic residues) spans 363–375 (PKPERDQLPEPHH). Residue tyrosine 390 is modified to Phosphotyrosine; by Tyr-kinases. A helical membrane pass occupies residues 470 to 488 (LFLWTFIVFTSVGTLVIFL).

Belongs to the ligand-gated ion channel (TC 1.A.9) family. Acetylcholine receptor (TC 1.A.9.1) subfamily. Beta-1/CHRNB1 sub-subfamily. In terms of assembly, pentamer of two alpha chains, and one each of the beta, delta, and gamma (in immature muscle) or epsilon (in mature muscle) chains. The muscle heteropentamer composed of alpha-1, beta-1, delta, epsilon subunits interacts with the alpha-conotoxin ImII.

The protein resides in the postsynaptic cell membrane. The protein localises to the cell membrane. The enzyme catalyses K(+)(in) = K(+)(out). It carries out the reaction Na(+)(in) = Na(+)(out). Functionally, after binding acetylcholine, the AChR responds by an extensive change in conformation that affects all subunits and leads to opening of an ion-conducting channel across the plasma membrane. This Mus musculus (Mouse) protein is Acetylcholine receptor subunit beta (Chrnb1).